The sequence spans 763 residues: Phospholipid phosphatase-related protein type 4 (763 aa).

The interval V33–R54 is disordered. S36 is modified (phosphoserine). The next 3 membrane-spanning stretches (helical) occupy residues L67–F87, A119–V139, and F178–L198. N-linked (GlcNAc...) asparagine glycans are attached at residues N214 and N219. The helical transmembrane segment at S247–F267 threads the bilayer. N268 carries N-linked (GlcNAc...) asparagine glycosylation. A run of 2 helical transmembrane segments spans residues K276–T296 and V308–G328. S346 is subject to Phosphoserine. An N-linked (GlcNAc...) asparagine glycan is attached at N362. S385 is modified (phosphoserine). N432 carries N-linked (GlcNAc...) asparagine glycosylation. S438 bears the Phosphoserine mark. N455 carries N-linked (GlcNAc...) asparagine glycosylation. The interval R458–G529 is disordered. 2 positions are modified to phosphoserine: S461 and S472. N513, N543, and N568 each carry an N-linked (GlcNAc...) asparagine glycan. Position 606 is a phosphoserine (S606). The span at D669–E694 shows a compositional bias: basic and acidic residues. Disordered stretches follow at residues D669–H698 and E739–D763. The segment covering R740–N749 has biased composition (polar residues).

It belongs to the PA-phosphatase related phosphoesterase family. Post-translationally, O-glycosylated. Probably at Ser-346. As to expression, expressed by glutamatergic neurons (at protein level).

Its subcellular location is the postsynaptic density membrane. Postsynaptic density membrane protein that indirectly regulates glutamatergic synaptic transmission through lysophosphatidic acid (LPA)-mediated signaling pathways. Binds lysophosphatidic acid (LPA) and mediates its internalization into cells. Could act as receptor or a transporter of this lipid at the post-synaptic membrane. Modulates lysophosphatidic acid (LPA) activity in neuron axonal outgrowth during development by attenuating phospholipid-induced axon collapse. This is Phospholipid phosphatase-related protein type 4 from Homo sapiens (Human).